A 195-amino-acid chain; its full sequence is Dephospho-CoA kinase (195 aa).

Residues 4-195 (IIGLTGGIAS…EQILDALQRL (192 aa)) enclose the DPCK domain. 12 to 17 (ASGKST) serves as a coordination point for ATP.

This sequence belongs to the CoaE family.

It localises to the cytoplasm. The catalysed reaction is 3'-dephospho-CoA + ATP = ADP + CoA + H(+). The protein operates within cofactor biosynthesis; coenzyme A biosynthesis; CoA from (R)-pantothenate: step 5/5. Functionally, catalyzes the phosphorylation of the 3'-hydroxyl group of dephosphocoenzyme A to form coenzyme A. This is Dephospho-CoA kinase from Streptococcus agalactiae serotype Ia (strain ATCC 27591 / A909 / CDC SS700).